Consider the following 524-residue polypeptide: Bifunctional purine biosynthesis protein PurH (524 aa).

Residues 1–154 (MTRLALLSTS…KNHAHVTVLC (154 aa)) form the MGS-like domain.

Belongs to the PurH family.

The enzyme catalyses (6R)-10-formyltetrahydrofolate + 5-amino-1-(5-phospho-beta-D-ribosyl)imidazole-4-carboxamide = 5-formamido-1-(5-phospho-D-ribosyl)imidazole-4-carboxamide + (6S)-5,6,7,8-tetrahydrofolate. The catalysed reaction is IMP + H2O = 5-formamido-1-(5-phospho-D-ribosyl)imidazole-4-carboxamide. It participates in purine metabolism; IMP biosynthesis via de novo pathway; 5-formamido-1-(5-phospho-D-ribosyl)imidazole-4-carboxamide from 5-amino-1-(5-phospho-D-ribosyl)imidazole-4-carboxamide (10-formyl THF route): step 1/1. Its pathway is purine metabolism; IMP biosynthesis via de novo pathway; IMP from 5-formamido-1-(5-phospho-D-ribosyl)imidazole-4-carboxamide: step 1/1. The sequence is that of Bifunctional purine biosynthesis protein PurH from Acaryochloris marina (strain MBIC 11017).